Here is a 466-residue protein sequence, read N- to C-terminus: Asparagine--tRNA ligase (466 aa).

This sequence belongs to the class-II aminoacyl-tRNA synthetase family. In terms of assembly, homodimer.

The protein resides in the cytoplasm. It catalyses the reaction tRNA(Asn) + L-asparagine + ATP = L-asparaginyl-tRNA(Asn) + AMP + diphosphate + H(+). The chain is Asparagine--tRNA ligase from Klebsiella pneumoniae subsp. pneumoniae (strain ATCC 700721 / MGH 78578).